The primary structure comprises 289 residues: D-xylonolactone lactonase (289 aa).

A Fe(2+)-binding site is contributed by Glu-17. D-xylono-1,5-lactone-binding residues include Arg-98, Asn-100, Glu-119, and Asn-145. Positions 145 and 195 each coordinate Fe(2+). Residue Asp-195 is the Proton donor/acceptor of the active site.

Belongs to the SMP-30/CGR1 family. Fe(2+) serves as cofactor.

It catalyses the reaction D-xylono-1,5-lactone + H2O = D-xylonate + H(+). Its function is as follows. Involved in the degradation of D-xylose. Catalyzes the hydrolysis of D-xylonolactone to D-xylonate. This Caulobacter vibrioides (strain ATCC 19089 / CIP 103742 / CB 15) (Caulobacter crescentus) protein is D-xylonolactone lactonase.